The primary structure comprises 309 residues: Homoserine O-succinyltransferase (309 aa).

C142 (acyl-thioester intermediate) is an active-site residue. Positions 163 and 192 each coordinate substrate. H235 acts as the Proton acceptor in catalysis. The active site involves E237. R249 serves as a coordination point for substrate.

The protein belongs to the MetA family.

It is found in the cytoplasm. It carries out the reaction L-homoserine + succinyl-CoA = O-succinyl-L-homoserine + CoA. It participates in amino-acid biosynthesis; L-methionine biosynthesis via de novo pathway; O-succinyl-L-homoserine from L-homoserine: step 1/1. Transfers a succinyl group from succinyl-CoA to L-homoserine, forming succinyl-L-homoserine. This is Homoserine O-succinyltransferase from Klebsiella pneumoniae (strain 342).